Here is a 104-residue protein sequence, read N- to C-terminus: Protamine-2 (104 aa).

Residues S8 and S10 each carry the phosphoserine modification. Residues 23-104 (WQEQGRNGQE…SRRRRRCRRY (82 aa)) form a disordered region. The span at 24-35 (QEQGRNGQEEQG) shows a compositional bias: low complexity. S37 is subject to Phosphoserine. Over residues 54 to 104 (YRRRRCSRRRRYRIHRRRSRSCRRRRRRSCRYRRRPRRGCRSRRRRRCRRY) the composition is skewed to basic residues.

The protein belongs to the protamine P2 family. In terms of assembly, interacts with TDRP. Proteolytic processing into mature chains is required for histone eviction during spermatogenesis. Transition proteins (TNP1 and TNP2) are required for processing. As to expression, testis.

The protein resides in the nucleus. The protein localises to the chromosome. Its function is as follows. Protamines substitute for histones in the chromatin of sperm during the haploid phase of spermatogenesis. They compact sperm DNA into a highly condensed, stable and inactive complex. The chain is Protamine-2 (PRM2) from Callithrix jacchus (White-tufted-ear marmoset).